The sequence spans 701 residues: Polyribonucleotide nucleotidyltransferase (701 aa).

Mg(2+) is bound by residues D490 and D496. The KH domain occupies 557 to 616 (PKVVTMSINPDKIRDVIGPGGKKINEIIDETGVKLDIEQDGTIFIGAVDQAMINRAKEII). Positions 626 to 694 (GQVYHAKVKR…KQGRVNASHK (69 aa)) constitute an S1 motif domain.

It belongs to the polyribonucleotide nucleotidyltransferase family. It depends on Mg(2+) as a cofactor.

It localises to the cytoplasm. It carries out the reaction RNA(n+1) + phosphate = RNA(n) + a ribonucleoside 5'-diphosphate. Functionally, involved in mRNA degradation. Catalyzes the phosphorolysis of single-stranded polyribonucleotides processively in the 3'- to 5'-direction. The protein is Polyribonucleotide nucleotidyltransferase of Staphylococcus epidermidis (strain ATCC 12228 / FDA PCI 1200).